The following is a 290-amino-acid chain: Aquaporin-3 (290 aa).

Residues methionine 1–glutamine 24 lie on the Cytoplasmic side of the membrane. Residues alanine 25–serine 42 traverse the membrane as a helical segment. Over valine 43 to phenylalanine 56 the chain is Extracellular. A helical transmembrane segment spans residues leucine 57–alanine 74. Over glycine 75 to serine 78 the chain is Cytoplasmic. Residues glycine 79 to phenylalanine 92 constitute an intramembrane region (discontinuously helical). Positions asparagine 83–alanine 85 match the NPA 1 motif. The Cytoplasmic segment spans residues leucine 93–lysine 100. A helical transmembrane segment spans residues leucine 101–glycine 121. The Extracellular segment spans residues leucine 122–asparagine 159. The N-linked (GlcNAc...) asparagine glycan is linked to asparagine 141. A helical transmembrane segment spans residues glycine 160–alanine 177. Residues isoleucine 178–glycine 189 are Cytoplasmic-facing. A helical membrane pass occupies residues leucine 190–methionine 206. Topologically, residues glycine 207–serine 210 are extracellular. The discontinuously helical intramembrane region spans glycine 211–leucine 224. The NPA 2 motif lies at asparagine 215–alanine 217. The Extracellular segment spans residues phenylalanine 225–tryptophan 242. A helical membrane pass occupies residues tryptophan 243–methionine 264. The Cytoplasmic segment spans residues isoleucine 265–glutamate 290.

It belongs to the MIP/aquaporin (TC 1.A.8) family. As to quaternary structure, homotetramer; each monomer provides an independent glycerol/water pore. Could also exist in other oligomeric states. In terms of tissue distribution, highly expressed in stomach and spleen, with lower expression in kidney and lung.

It localises to the cell membrane. It is found in the basolateral cell membrane. It carries out the reaction glycerol(in) = glycerol(out). The enzyme catalyses H2O(in) = H2O(out). The catalysed reaction is urea(in) = urea(out). It catalyses the reaction H2O2(out) = H2O2(in). Aquaglyceroporins form homotetrameric transmembrane channels, with each monomer independently mediating glycerol and water transport across the plasma membrane along their osmotic gradient. Could also be permeable to urea. Also participates in cell permeability to H2O2 and H2O2-mediated signaling. In skin, transports glycerol to the epidermis and stratum corneum, where it maintains hydration, elasticity, and supports lipid biosynthesis for barrier repair. In kidney, contributes to the reabsorption of water, helping the body maintain proper fluid balance. In Sus scrofa (Pig), this protein is Aquaporin-3.